The chain runs to 204 residues: Dof zinc finger protein DOF3.1 (204 aa).

The disordered stretch occupies residues 1 to 25; that stretch reads MQDPAAYYQTMMAKQQQQQQPQFAE. The Dof-type zinc finger occupies 29-83; the sequence is LKCPRCDSPNTKFCYYNNYNLSQPRHFCKSCRRYWTKGGALRNVPVGGGSRKNAT. Positions 31, 34, 56, and 59 each coordinate Zn(2+). Disordered stretches follow at residues 70-128 and 182-204; these read RNVP…TRML and RTEPGNNNNNPWTDLAMNRAEKN. The span at 84–102 shows a compositional bias: low complexity; that stretch reads KRSTSSSSSASSPSNSSQN. Positions 106-124 are enriched in basic and acidic residues; the sequence is KNPDPDPDPRNSQKPDLDP.

It is found in the nucleus. In terms of biological role, transcription factor that binds specifically to a 5'-AA[AG]G-3' consensus core sequence. The chain is Dof zinc finger protein DOF3.1 (DOF3.1) from Arabidopsis thaliana (Mouse-ear cress).